Consider the following 320-residue polypeptide: Zygote arrest protein 1 (320 aa).

Disordered stretches follow at residues 106–130 (ELRR…EVRY) and 155–208 (DRPA…AEGS). The segment at 222–305 (KYGYYHCREC…RQDLCGRCKG (84 aa)) adopts a 3CxxC-type zinc-finger fold.

The protein belongs to the ZAR1 family.

Its subcellular location is the cytoplasm. It localises to the cytoplasmic ribonucleoprotein granule. In terms of biological role, mRNA-binding protein required for maternal mRNA storage, translation and degradation during oocyte maturation. Probably promotes formation of some phase-separated membraneless compartment that stores maternal mRNAs in oocytes: acts by undergoing liquid-liquid phase separation upon binding to maternal mRNAs. Binds to the 3'-UTR of maternal mRNAs, inhibiting their translation. The chain is Zygote arrest protein 1 from Takifugu rubripes (Japanese pufferfish).